A 252-amino-acid chain; its full sequence is Outer membrane protein P1 (252 aa).

Residues 1-23 form the signal peptide; sequence METTTKLAIGVSALCCLASAAFA.

The protein belongs to the Coxiella porin P1 (CPP1) (TC 1.B.43) family. As to quaternary structure, may form trimers.

It is found in the cell outer membrane. Its function is as follows. Able to form a pore in lipid bilayers. This is Outer membrane protein P1 (ompP1) from Coxiella burnetii (strain RSA 493 / Nine Mile phase I).